The chain runs to 267 residues: Lectin SfL-1 (267 aa).

A run of 4 repeats spans residues 1–67, 68–135, 136–202, and 203–267. The tract at residues 1 to 267 is 4 X approximate tandem repeats; the sequence is GRYTVQNQWG…GPIGFKGTAI (267 aa).

In terms of assembly, monomer.

Functionally, lectin specific for high mannose N-glycans, recognizes the branched moiety of these glycans. Does not recognize other types of N-glycans or monosaccharides. The chain is Lectin SfL-1 from Solieria filiformis (Red alga).